A 193-amino-acid polypeptide reads, in one-letter code: dCTP deaminase (193 aa).

Residues 110-115, aspartate 128, 136-138, tyrosine 171, lysine 178, and glutamine 182 contribute to the dCTP site; these read RSSLAR and VLE. Glutamate 138 (proton donor/acceptor) is an active-site residue. The disordered stretch occupies residues 171–193; the sequence is YNKRKNAKYKDQQDAVASRISQD.

The protein belongs to the dCTP deaminase family. Homotrimer.

The catalysed reaction is dCTP + H2O + H(+) = dUTP + NH4(+). It functions in the pathway pyrimidine metabolism; dUMP biosynthesis; dUMP from dCTP (dUTP route): step 1/2. Its function is as follows. Catalyzes the deamination of dCTP to dUTP. This is dCTP deaminase from Shewanella oneidensis (strain ATCC 700550 / JCM 31522 / CIP 106686 / LMG 19005 / NCIMB 14063 / MR-1).